We begin with the raw amino-acid sequence, 579 residues long: Zinc finger protein 384 (579 aa).

The tract at residues 171-198 (TLTEEGGGGGGGGGTVAPPKPPRGRKKK) is disordered. Residues 175–185 (EGGGGGGGGGT) show a composition bias toward gly residues. C2H2-type zinc fingers lie at residues 229–251 (YRCRMCSLTFYSKSEMQIHSKSH), 257–279 (HKCPHCSKTFANSSYLAQHIRIH), 285–307 (YSCNFCEKSFRQLSHLQQHTRIH), 318–340 (HKCPHCSKTFANTSYLAQHLRIH), 346–368 (YNCSYCQKAFRQLSHLQQHTRIH), 374–398 (YKCAHPGCEKAFTQLSNLQSHRRQH), 404–426 (FKCHNCHRAYTDAASLEAHLSTH), and 434–456 (YTCTICSRAYTSETYLMKHMRKH). Over residues 500 to 513 (QAQASQASQQQQQQ) the composition is skewed to low complexity. The disordered stretch occupies residues 500 to 553 (QAQASQASQQQQQQQPPPPQPPHFQSPGAAPQGGGGGDSNQNPPPQCSFDLTPY). A compositionally biased stretch (pro residues) spans 514-523 (QPPPPQPPHF).

The protein belongs to the krueppel C2H2-type zinc-finger protein family. As to quaternary structure, interacts with BCAR1. As to expression, expressed in osteocytes, osteoblasts, and chondrocytes in bone.

The protein localises to the nucleus. Functionally, transcription factor that binds the consensus DNA sequence [GC]AAAAA. Seems to bind and regulate the promoters of MMP1, MMP3, MMP7 and COL1A1. This chain is Zinc finger protein 384 (Znf384), found in Rattus norvegicus (Rat).